A 146-amino-acid chain; its full sequence is 3-dehydroquinate dehydratase (146 aa).

Tyr24 (proton acceptor) is an active-site residue. Residues Asn73, His79, and Asp86 each contribute to the substrate site. Residue His99 is the Proton donor of the active site. Substrate-binding positions include 100-101 (LS) and Arg110.

This sequence belongs to the type-II 3-dehydroquinase family. As to quaternary structure, homododecamer.

The catalysed reaction is 3-dehydroquinate = 3-dehydroshikimate + H2O. It participates in metabolic intermediate biosynthesis; chorismate biosynthesis; chorismate from D-erythrose 4-phosphate and phosphoenolpyruvate: step 3/7. In terms of biological role, catalyzes a trans-dehydration via an enolate intermediate. The polypeptide is 3-dehydroquinate dehydratase (Shewanella baltica (strain OS223)).